The sequence spans 346 residues: Methylthioribose-1-phosphate isomerase (346 aa).

Substrate-binding positions include R48–A50, R88, and Q192. The Proton donor role is filled by D233. Position 243 to 244 (N243 to K244) interacts with substrate.

This sequence belongs to the eIF-2B alpha/beta/delta subunits family. MtnA subfamily.

It carries out the reaction 5-(methylsulfanyl)-alpha-D-ribose 1-phosphate = 5-(methylsulfanyl)-D-ribulose 1-phosphate. The protein operates within amino-acid biosynthesis; L-methionine biosynthesis via salvage pathway; L-methionine from S-methyl-5-thio-alpha-D-ribose 1-phosphate: step 1/6. Catalyzes the interconversion of methylthioribose-1-phosphate (MTR-1-P) into methylthioribulose-1-phosphate (MTRu-1-P). The sequence is that of Methylthioribose-1-phosphate isomerase from Alcanivorax borkumensis (strain ATCC 700651 / DSM 11573 / NCIMB 13689 / SK2).